We begin with the raw amino-acid sequence, 511 residues long: Cytochrome P450 monooxygenase roqR (511 aa).

An N-terminal signal peptide occupies residues Met1–Ala23. Asn364, Asn373, and Asn383 each carry an N-linked (GlcNAc...) asparagine glycan. Cys455 contacts heme.

It belongs to the cytochrome P450 family. It depends on heme as a cofactor.

It functions in the pathway alkaloid biosynthesis. Functionally, cytochrome P450 monooxygenase; part of the gene cluster that mediates the biosynthesis of the mycotoxins roquefortine C and meleagrin. The first stage is catalyzed by the dipeptide synthase roqA which condenses histidine and tryptophan to produce histidyltryptophanyldiketopiperazine (HTD). HTD is then converted to roquefortine C through two possible pathways. In the first pathway, prenyltransferase roqD transforms HTD to the intermediate roquefortine D, which is in turn converted to roquefortine C by the cytochrome P450 monooxygenase roqR. In the second pathway, HTD is first converted to the intermediate dehydrohistidyltryptophanyldi-ketopiperazine (DHTD) by roqR which is then prenylated by roqD to form roquefortine C. Roquefortine C can be further transformed to meleagrin via three more reactions including oxydation to glandicolin A by roqM, which is further reduced to glandicoline B by roqO. Finally, glandicoline B is converted to meleagrin by the glandicoline B O-methyltransferase roqN. More studies identified further branching and additional metabolites produced by the roquefortine/meleagrin cluster, including roquefortine F, roquefortine L, roquefortine M, roquefortine N and neoxaline. The polypeptide is Cytochrome P450 monooxygenase roqR (Penicillium rubens (strain ATCC 28089 / DSM 1075 / NRRL 1951 / Wisconsin 54-1255) (Penicillium chrysogenum)).